The chain runs to 258 residues: 5'-nucleotidase SurE (258 aa).

Residues Asp-14, Asp-15, Ser-45, and Asn-101 each contribute to the a divalent metal cation site.

The protein belongs to the SurE nucleotidase family. It depends on a divalent metal cation as a cofactor.

It is found in the cytoplasm. It catalyses the reaction a ribonucleoside 5'-phosphate + H2O = a ribonucleoside + phosphate. Functionally, nucleotidase that shows phosphatase activity on nucleoside 5'-monophosphates. This is 5'-nucleotidase SurE from Chlorobium phaeobacteroides (strain DSM 266 / SMG 266 / 2430).